We begin with the raw amino-acid sequence, 511 residues long: Phosphoenolpyruvate carboxylase (511 aa).

The protein belongs to the PEPCase type 2 family. As to quaternary structure, homotetramer. Requires Mg(2+) as cofactor.

It carries out the reaction oxaloacetate + phosphate = phosphoenolpyruvate + hydrogencarbonate. Functionally, catalyzes the irreversible beta-carboxylation of phosphoenolpyruvate (PEP) to form oxaloacetate (OAA), a four-carbon dicarboxylic acid source for the tricarboxylic acid cycle. In Saccharolobus islandicus (strain Y.G.57.14 / Yellowstone #1) (Sulfolobus islandicus), this protein is Phosphoenolpyruvate carboxylase.